Consider the following 334-residue polypeptide: o-succinylbenzoate synthase (334 aa).

The active-site Proton donor is Lys-107. 3 residues coordinate Mg(2+): Asp-135, Glu-162, and Asp-185. Lys-209 functions as the Proton acceptor in the catalytic mechanism.

It belongs to the mandelate racemase/muconate lactonizing enzyme family. MenC type 1 subfamily. A divalent metal cation is required as a cofactor.

It catalyses the reaction (1R,6R)-6-hydroxy-2-succinyl-cyclohexa-2,4-diene-1-carboxylate = 2-succinylbenzoate + H2O. Its pathway is quinol/quinone metabolism; 1,4-dihydroxy-2-naphthoate biosynthesis; 1,4-dihydroxy-2-naphthoate from chorismate: step 4/7. It participates in quinol/quinone metabolism; menaquinone biosynthesis. In terms of biological role, converts 2-succinyl-6-hydroxy-2,4-cyclohexadiene-1-carboxylate (SHCHC) to 2-succinylbenzoate (OSB). This Mycobacterium leprae (strain TN) protein is o-succinylbenzoate synthase.